Consider the following 395-residue polypeptide: Cyclic AMP-responsive element-binding protein 3-like protein 4 (395 aa).

Topologically, residues Met-1–Ser-295 are cytoplasmic. Residues Glu-82–Ser-108 form a disordered region. Residues Val-217–Leu-280 enclose the bZIP domain. A basic motif region spans residues Lys-219–Arg-248. A leucine-zipper region spans residues Leu-259 to Leu-280. Residues Thr-296–Phe-316 traverse the membrane as a helical; Signal-anchor for type II membrane protein segment. The Lumenal segment spans residues Gln-317–Met-395. The tract at residues Arg-355 to Met-395 is disordered. Asn-366 carries N-linked (GlcNAc...) asparagine glycosylation.

This sequence belongs to the bZIP family. ATF subfamily. As to quaternary structure, binds DNA as a dimer. In terms of processing, N-glycosylated in the C-terminal region. Controlled by regulated intramembrane proteolysis (RIP). Following ER stress a fragment containing the cytoplasmic transcription factor domain is released by proteolysis. The cleavage seems to be performed sequentially by site-1 and site-2 proteases (PS1 and PS2). PS1 cleavage may be suppressed by a determinant in the C-terminal region. As to expression, according to PubMed:11830526, exclusively expressed in the prostate. Expressed in breast and prostate cancer cell lines. Expressed in prostatic luminal epithelial cells (at protein level). Expression is significantly more abundant in prostate cancer than in benign prostatic tissue (prostatic hyperplasia). According to PubMed:12111373, also expressed in brain, pancreas and skeletal muscle, and at lower levels in small intestine, testis, leukocyte and thymus.

Its subcellular location is the endoplasmic reticulum membrane. The protein localises to the golgi apparatus membrane. The protein resides in the nucleus. Its function is as follows. Transcriptional activator that may play a role in the unfolded protein response. Binds to the UPR element (UPRE) but not to CRE element. Preferentially binds DNA with to the consensus sequence 5'-T[GT]ACGT[GA][GT]-3' and has transcriptional activation activity from UPRE. Binds to NF-kappa-B site and has transcriptional activation activity from NF-kappa-B-containing regulatory elements. This chain is Cyclic AMP-responsive element-binding protein 3-like protein 4 (CREB3L4), found in Homo sapiens (Human).